Reading from the N-terminus, the 440-residue chain is Cell division protein FtsA (440 aa).

It belongs to the FtsA/MreB family. Self-interacts. Interacts with FtsZ.

It localises to the cell membrane. Cell division protein that is involved in the assembly of the Z ring. May serve as a membrane anchor for the Z ring. In Enterococcus faecalis (strain ATCC 700802 / V583), this protein is Cell division protein FtsA.